The primary structure comprises 155 residues: DNA-binding protein inhibitor ID-1 (155 aa).

The bHLH domain maps to 53 to 105 (LPALLDEQQVNVLLYDMNGCYSRLKELVPTLPQNRKVSKVEILQHVIDYIRDL). The Nuclear export signal motif lies at 98-111 (VIDYIRDLQLELNS).

As to quaternary structure, heterodimer with other HLH proteins. Interacts with COPS5, IFI204, GATA4 and NKX2-5. Interacts with CLOCK and BMAL1.

It localises to the cytoplasm. It is found in the nucleus. Transcriptional regulator (lacking a basic DNA binding domain) which negatively regulates the basic helix-loop-helix (bHLH) transcription factors by forming heterodimers and inhibiting their DNA binding and transcriptional activity. Implicated in regulating a variety of cellular processes, including cellular growth, senescence, differentiation, apoptosis, angiogenesis, and neoplastic transformation. Inhibits skeletal muscle and cardiac myocyte differentiation. Regulates the circadian clock by repressing the transcriptional activator activity of the CLOCK-BMAL1 heterodimer. The chain is DNA-binding protein inhibitor ID-1 (ID1) from Homo sapiens (Human).